The sequence spans 1630 residues: Histone transcription regulator 3 homolog (1630 aa).

The TPR 1 repeat unit spans residues 8–42 (NAASEDLDKEKRTLEIRIEEAVQIYQNALSAQKQG). A disordered region spans residues 325 to 347 (KDIVPPPSDNLPKPQLLKRPIDD). A TPR 2 repeat occupies 1230–1263 (WRALYMLGKACRKCGDMENALVHFEAAAALAPTK).

This sequence belongs to the HIR3 family. In terms of assembly, interacts with hip1 and slm9.

It localises to the nucleus. Functionally, has a role in a nucleosome assembly pathway that is required for the integrity of heterochromatin and proper chromosome segregation. Required for transcriptional silencing in the outer repeat (otr) region of centromeric repeats and the Tf2 long terminal repeat retrotransposons. This is Histone transcription regulator 3 homolog (hip3) from Schizosaccharomyces pombe (strain 972 / ATCC 24843) (Fission yeast).